Consider the following 248-residue polypeptide: 2,3-bisphosphoglycerate-dependent phosphoglycerate mutase (248 aa).

Residues 8–15 (RHGESEWN), 21–22 (TG), Arg-60, 87–90 (ERHY), Lys-98, 114–115 (RR), and 183–184 (GN) contribute to the substrate site. The active-site Tele-phosphohistidine intermediate is the His-9. Glu-87 functions as the Proton donor/acceptor in the catalytic mechanism.

It belongs to the phosphoglycerate mutase family. BPG-dependent PGAM subfamily.

It carries out the reaction (2R)-2-phosphoglycerate = (2R)-3-phosphoglycerate. Its pathway is carbohydrate degradation; glycolysis; pyruvate from D-glyceraldehyde 3-phosphate: step 3/5. In terms of biological role, catalyzes the interconversion of 2-phosphoglycerate and 3-phosphoglycerate. In Borrelia garinii subsp. bavariensis (strain ATCC BAA-2496 / DSM 23469 / PBi) (Borreliella bavariensis), this protein is 2,3-bisphosphoglycerate-dependent phosphoglycerate mutase.